Here is a 438-residue protein sequence, read N- to C-terminus: Xanthine permease (438 aa).

The next 13 helical transmembrane spans lie at 11–31 (LGIQ…LIVG), 41–61 (LTYL…LQVW), 65–85 (FFGI…SPMI), 100–120 (IIAS…LVSF), 121–141 (FPPV…MPVA), 154–174 (FGDL…VLLY), 180–200 (FIKS…AYFM), 220–240 (FYFG…IVAI), 272–292 (AEGL…TAFS), 308–328 (VIVV…IAAF), 331–351 (IIPS…VIAY), 367–387 (LLIV…PDIF), and 396–416 (LLTT…NIVY).

Belongs to the nucleobase:cation symporter-2 (NCS2) (TC 2.A.40) family.

It is found in the cell membrane. In terms of biological role, transport of xanthine in the cell. In Bacillus subtilis (strain 168), this protein is Xanthine permease (pbuX).